The primary structure comprises 185 residues: UPF0149 protein PD_0802 (185 aa).

Belongs to the UPF0149 family.

The chain is UPF0149 protein PD_0802 from Xylella fastidiosa (strain Temecula1 / ATCC 700964).